Here is a 135-residue protein sequence, read N- to C-terminus: Galectin-1 (135 aa).

N-acetylalanine is present on A2. The Galectin domain maps to 4 to 135 (GLVASNLNLK…DFKIKCVAFE (132 aa)). An N6-acetyllysine mark is found at K13 and K29. S30 carries the post-translational modification Phosphoserine. A beta-D-galactoside-binding positions include 45–49 (HFNPR), H53, N62, and 69–72 (WGAE). The residue at position 108 (K108) is an N6-acetyllysine; alternate. K108 carries the post-translational modification N6-succinyllysine; alternate. K128 carries the N6-acetyllysine modification.

As to quaternary structure, homodimer. Binds LGALS3BP. Interacts with CD2, CD3, CD4, CD6, CD7, CD43, ALCAM and CD45. Interacts with laminin (via poly-N-acetyllactosamine). Interacts with SUSD2. Interacts with cargo receptor TMED10; the interaction mediates the translocation from the cytoplasm into the ERGIC (endoplasmic reticulum-Golgi intermediate compartment) and thereby secretion.

It localises to the secreted. The protein resides in the extracellular space. The protein localises to the extracellular matrix. It is found in the cytoplasm. Its function is as follows. Lectin that binds beta-galactoside and a wide array of complex carbohydrates. Plays a role in regulating apoptosis, cell proliferation and cell differentiation. Inhibits CD45 protein phosphatase activity and therefore the dephosphorylation of Lyn kinase. Strong inducer of T-cell apoptosis. Has hemagglutinating activity towards human erythrocytes. The sequence is that of Galectin-1 from Capra hircus (Goat).